Reading from the N-terminus, the 407-residue chain is MALTLAATALVLLPLVTAQQIGSIAENHPELTTYRCSSQAGCVAQSTSVVLDINAHWIHQNGAQTSCTTSSGLDPSLCPDKVTCSQNCVVEGITDYSSFGVQNSGDAMTLRQYQVQNGQIKTLRPRVYLLAEDGINYSKLQLLNQEFTFDVDASKLPCGMNGALYLSEMDASGGRSALNPAGATYGTGYCDAQCFNPGPWINGEANTAGAGACCQEMDLWEANSRSTIFSPHPCTTAGLYACTGAECYSICDGYGCTYNPYELGAKDYYGYGLTIDTAKPITVVTQFMTADNTATGTLAEIRRLYVQDGKVIGNTAVAMTEAFCSSSRTFEELGGLQRMGEALGRGMVPVFSIWDDPGLWMHWLDSDGAGPCGNTEGDPAFIQANYPNTAVTFSKVRWGDIGSTYSS.

Residues 1–18 (MALTLAATALVLLPLVTA) form the signal peptide. The N-linked (GlcNAc...) asparagine glycan is linked to Asn-136. Glu-216 acts as the Nucleophile in catalysis. The active-site Proton donor is the Glu-221.

The protein belongs to the glycosyl hydrolase 7 (cellulase C) family.

Its subcellular location is the secreted. The enzyme catalyses Endohydrolysis of (1-&gt;4)-beta-D-glucosidic linkages in cellulose, lichenin and cereal beta-D-glucans.. In terms of biological role, has endoglucanase activity on substrates containing beta-1,4 glycosidic bonds, like in carboxymethylcellulose (CMC), hydroxyethylcellulose (HEC) and beta-glucan. Involved in the degradation of complex natural cellulosic substrates. This Neosartorya fischeri (strain ATCC 1020 / DSM 3700 / CBS 544.65 / FGSC A1164 / JCM 1740 / NRRL 181 / WB 181) (Aspergillus fischerianus) protein is Probable endo-beta-1,4-glucanase celB (celB).